We begin with the raw amino-acid sequence, 500 residues long: MTLGYNEKLVLLTIAKLEKASVEEIVKETRLDQVAVMRAILTLEKEGLIKLHERKEKIIVLTDIGKEYSKIGLPEIRALRVLREKKKAYLDELKDVLREDELKAIVGILRREGLANVRKDEKGLVLEITEKGEKLGERPIDIALKLLSEKGEVSVDEISRIIDVKDLKRRKIAREDERVERTVEITEKGKKLVSKGIELKREVTRLTPELIASGKWREVELKPFNIKAPVKRIYPGKKQPYRVFLDKIRRRLIEMGFIEMTVDSLIETQFWNFDALFQPQNHPAREWTDTYQLKYPEKGYLPDESLVSRVKEAHERGLAGSRGWGYVWSPERAMLLMPRAHATALSARQLAKGIEIPGKYFTIQRVFRPDVLDRTHLIEFNQIDGFVAGEDLTFRHLLGILKRFAIEIAGAKKVKFFPDYYPFTEPSVQLSAYHPELGWVEFGGAGVFREEMTEALGIKVPVIAWGIGIDRLAMFKLGIDDIRYLFSYDLRWLREAKLIW.

Residues Thr343, 382 to 384, and Phe423 each bind L-phenylalanine; that span reads QID. Glu425 serves as a coordination point for Mg(2+). Residue Phe448 participates in L-phenylalanine binding.

It belongs to the class-II aminoacyl-tRNA synthetase family. Phe-tRNA synthetase alpha subunit type 2 subfamily. Tetramer of two alpha and two beta subunits. It depends on Mg(2+) as a cofactor.

It localises to the cytoplasm. It catalyses the reaction tRNA(Phe) + L-phenylalanine + ATP = L-phenylalanyl-tRNA(Phe) + AMP + diphosphate + H(+). In Pyrococcus abyssi (strain GE5 / Orsay), this protein is Phenylalanine--tRNA ligase alpha subunit.